Here is a 395-residue protein sequence, read N- to C-terminus: 3-sulfinopropanoyl-CoA desulfinase (395 aa).

FAD is bound by residues 121–124 (ICIS), Ser-130, and 153–156 (YWIT). Residue 243 to 244 (YN) coordinates substrate. Residues Arg-272, Gln-339, Ser-343, 366–370 (GGTAQ), and Gln-387 contribute to the FAD site.

This sequence belongs to the acyl-CoA dehydrogenase family. Homotrimer or homotetramer. Requires FAD as cofactor.

The enzyme catalyses 3-sulfinopropanoyl-CoA + H2O = propanoyl-CoA + sulfite + H(+). Functionally, catalyzes the conversion 3-sulfinopropanoyl-CoA (3SP-CoA) to propanoyl-CoA by abstraction of sulfite. Does not show dehydrogenase activity. This is 3-sulfinopropanoyl-CoA desulfinase from Cupriavidus necator (strain ATCC 43291 / DSM 13513 / CCUG 52238 / LMG 8453 / N-1) (Ralstonia eutropha).